The chain runs to 158 residues: Glutathione peroxidase homolog BsaA (158 aa).

Residue Cys-36 is part of the active site.

The protein belongs to the glutathione peroxidase family.

In Staphylococcus epidermidis (strain ATCC 12228 / FDA PCI 1200), this protein is Glutathione peroxidase homolog BsaA (bsaA).